A 545-amino-acid polypeptide reads, in one-letter code: MDNLRFVLFVFFIFLSFLLWEQWQIDYGPKPQAVAQTDGASRPAGDLPQRPSDDESDVTVHTEAPTQEGSRRIRVHTDVLSLEIDTRGGDLRQLDLLNYPVSKEQPDRPVRLLTDQGDIFVAQSGFIGAAQQVPNHHSLWQAEAGEYRLQDGQDILRVPLTWSDGQGVTVTKTYILRRGSYLIDMEQTIDNRSNTNWTGRQYMQLQRKEPTSAQEDSQFIRTYTGGVLHTEDKSYEKIAFKDMASGNLDAKSRQGWIAMIQHYFLAAWVPPAEDESTFYTKALADRVFVIGAYSPPAEVPAGSSQTLKARLFAGPKLQHVLEGIAPGLELTADFGILTVIAKPIYWLLETFHGFFNNWGWAIIFVTLVIKALFFKLSEASYRSMANMRKLQPKLVELKERYGEDRQRYNQAMMELYRKEKVNPLGGCLPILVQIPVFISLYWVLVESVDLRQAPFLLWLDDLSSKDPYFVLPLIMGVSMFIQQRLNPPPTDPIQARVMQFFPLVFTVFFLFFPSGLVLYWVVNNILSIIQQWYITRQIEKNTARA.

Residues 6-26 (FVLFVFFIFLSFLLWEQWQID) traverse the membrane as a helical segment. Residues 32-69 (QAVAQTDGASRPAGDLPQRPSDDESDVTVHTEAPTQEG) form a disordered region. The next 4 helical transmembrane spans lie at 354 to 374 (FFNN…ALFF), 425 to 445 (GGCL…WVLV), 462 to 482 (LSSK…MFIQ), and 500 to 520 (FFPL…VLYW).

It belongs to the OXA1/ALB3/YidC family. Type 1 subfamily. In terms of assembly, interacts with the Sec translocase complex via SecD. Specifically interacts with transmembrane segments of nascent integral membrane proteins during membrane integration.

The protein resides in the cell inner membrane. Functionally, required for the insertion and/or proper folding and/or complex formation of integral membrane proteins into the membrane. Involved in integration of membrane proteins that insert both dependently and independently of the Sec translocase complex, as well as at least some lipoproteins. Aids folding of multispanning membrane proteins. In Methylococcus capsulatus (strain ATCC 33009 / NCIMB 11132 / Bath), this protein is Membrane protein insertase YidC.